Consider the following 279-residue polypeptide: Phosphatidylglycerol--prolipoprotein diacylglyceryl transferase (279 aa).

7 consecutive transmembrane segments (helical) span residues 22 to 42, 58 to 78, 89 to 109, 128 to 148, 195 to 215, 223 to 243, and 256 to 276; these read SAHWYGLMYLIGFYFIMWSSI, ILYFSFLNALIGGRIGYVIFY, FIFKVWEGGMSFHGGLLGSII, FLVPLIPFGLGFGRIGNFING, ISQLYEMFLEGILLFIILNIF, GYMSGLFLILYGSFRIIAEFF, and YISLGQILSIPMILYGLILII. R141 serves as a coordination point for a 1,2-diacyl-sn-glycero-3-phospho-(1'-sn-glycerol).

The protein belongs to the Lgt family.

It is found in the cell membrane. The enzyme catalyses L-cysteinyl-[prolipoprotein] + a 1,2-diacyl-sn-glycero-3-phospho-(1'-sn-glycerol) = an S-1,2-diacyl-sn-glyceryl-L-cysteinyl-[prolipoprotein] + sn-glycerol 1-phosphate + H(+). Its pathway is protein modification; lipoprotein biosynthesis (diacylglyceryl transfer). Functionally, catalyzes the transfer of the diacylglyceryl group from phosphatidylglycerol to the sulfhydryl group of the N-terminal cysteine of a prolipoprotein, the first step in the formation of mature lipoproteins. This is Phosphatidylglycerol--prolipoprotein diacylglyceryl transferase from Wigglesworthia glossinidia brevipalpis.